The sequence spans 88 residues: Small ribosomal subunit protein uS17 (88 aa).

Belongs to the universal ribosomal protein uS17 family. As to quaternary structure, part of the 30S ribosomal subunit.

Functionally, one of the primary rRNA binding proteins, it binds specifically to the 5'-end of 16S ribosomal RNA. The chain is Small ribosomal subunit protein uS17 from Prochlorococcus marinus subsp. pastoris (strain CCMP1986 / NIES-2087 / MED4).